The primary structure comprises 126 residues: Glycine cleavage system H protein (126 aa).

A Lipoyl-binding domain is found at 22–104; that stretch reads IAYVGITDYA…YGKGWLIKIK (83 aa). K63 is subject to N6-lipoyllysine.

The protein belongs to the GcvH family. The glycine cleavage system is composed of four proteins: P, T, L and H. The cofactor is (R)-lipoate.

In terms of biological role, the glycine cleavage system catalyzes the degradation of glycine. The H protein shuttles the methylamine group of glycine from the P protein to the T protein. In Phocaeicola vulgatus (strain ATCC 8482 / DSM 1447 / JCM 5826 / CCUG 4940 / NBRC 14291 / NCTC 11154) (Bacteroides vulgatus), this protein is Glycine cleavage system H protein.